The primary structure comprises 451 residues: Bifunctional protein GlmU (451 aa).

The segment at 1–232 is pyrophosphorylase; sequence MTARSSLTIV…EDEVRGINTK (232 aa). UDP-N-acetyl-alpha-D-glucosamine contacts are provided by residues 11-14, lysine 25, glutamine 78, and 83-84; these read LAAG and GT. Aspartate 108 contacts Mg(2+). Positions 144, 158, 173, and 230 each coordinate UDP-N-acetyl-alpha-D-glucosamine. Asparagine 230 provides a ligand contact to Mg(2+). The linker stretch occupies residues 233 to 253; that stretch reads AQLAEAESVMQARLRKAAMEA. The interval 254–451 is N-acetyltransferase; sequence GVTLIAPETV…MKTRGKKPEK (198 aa). The UDP-N-acetyl-alpha-D-glucosamine site is built by arginine 319 and lysine 337. The active-site Proton acceptor is histidine 349. Tyrosine 352 and asparagine 363 together coordinate UDP-N-acetyl-alpha-D-glucosamine. Acetyl-CoA-binding positions include alanine 366, 372 to 373, serine 409, and arginine 426; that span reads NY.

In the N-terminal section; belongs to the N-acetylglucosamine-1-phosphate uridyltransferase family. This sequence in the C-terminal section; belongs to the transferase hexapeptide repeat family. Homotrimer. The cofactor is Mg(2+).

Its subcellular location is the cytoplasm. It carries out the reaction alpha-D-glucosamine 1-phosphate + acetyl-CoA = N-acetyl-alpha-D-glucosamine 1-phosphate + CoA + H(+). The enzyme catalyses N-acetyl-alpha-D-glucosamine 1-phosphate + UTP + H(+) = UDP-N-acetyl-alpha-D-glucosamine + diphosphate. It functions in the pathway nucleotide-sugar biosynthesis; UDP-N-acetyl-alpha-D-glucosamine biosynthesis; N-acetyl-alpha-D-glucosamine 1-phosphate from alpha-D-glucosamine 6-phosphate (route II): step 2/2. It participates in nucleotide-sugar biosynthesis; UDP-N-acetyl-alpha-D-glucosamine biosynthesis; UDP-N-acetyl-alpha-D-glucosamine from N-acetyl-alpha-D-glucosamine 1-phosphate: step 1/1. The protein operates within bacterial outer membrane biogenesis; LPS lipid A biosynthesis. In terms of biological role, catalyzes the last two sequential reactions in the de novo biosynthetic pathway for UDP-N-acetylglucosamine (UDP-GlcNAc). The C-terminal domain catalyzes the transfer of acetyl group from acetyl coenzyme A to glucosamine-1-phosphate (GlcN-1-P) to produce N-acetylglucosamine-1-phosphate (GlcNAc-1-P), which is converted into UDP-GlcNAc by the transfer of uridine 5-monophosphate (from uridine 5-triphosphate), a reaction catalyzed by the N-terminal domain. The chain is Bifunctional protein GlmU from Bradyrhizobium diazoefficiens (strain JCM 10833 / BCRC 13528 / IAM 13628 / NBRC 14792 / USDA 110).